The following is a 282-amino-acid chain: Acyl-CoA-binding domain-containing protein 6 (282 aa).

Positions 1 to 39 are disordered; that stretch reads MATPFLPSGATTGDSGGELSSGDDSGDMESFQTPEAEGT. A Phosphoserine modification is found at Ser-41. The region spanning 42–127 is the ACB domain; the sequence is LAELFEKAAA…VKKLDPGWNP (86 aa). An acyl-CoA contacts are provided by residues 69 to 73 and Lys-95; that span reads YARFK. Position 106 is a phosphoserine (Ser-106). An an acyl-CoA-binding site is contributed by Tyr-114. ANK repeat units lie at residues 191–220 and 224–253; these read EGRALLHWACDRGHKELVKVLLQYEAGINC and EGQTALHYAAACEFLDIVELLLQSGADPTL.

As to quaternary structure, monomer.

It localises to the cytoplasm. The protein resides in the nucleus. Its function is as follows. Binds long-chain acyl-coenzyme A molecules with a strong preference for unsaturated C18:1-CoA, lower affinity for unsaturated C20:4-CoA, and very weak affinity for saturated C16:0-CoA. Does not bind fatty acids. Plays a role in protein N-myristoylation. In Mus musculus (Mouse), this protein is Acyl-CoA-binding domain-containing protein 6 (Acbd6).